A 760-amino-acid chain; its full sequence is Catecholate siderophore receptor Fiu (760 aa).

Residues 1–31 (MENNRNFPARQFHSLTFFAGLCIGITPVAQA) form the signal peptide. The TBDR plug domain maps to 67–175 (PVADTTRTMT…PTGSINMISK (109 aa)). In terms of domain architecture, TBDR beta-barrel spans 180-760 (DSGIDASASI…TFLLTANMHF (581 aa)). The TonB C-terminal box motif lies at 743–760 (RYHPGEPRTFLLTANMHF).

Belongs to the TonB-dependent receptor family.

The protein localises to the cell outer membrane. In terms of biological role, involved in the active transport across the outer membrane of iron complexed with catecholate siderophores such as dihydroxybenzoylserine and dihydroxybenzoate. It derives its energy for transport by interacting with the trans-periplasmic membrane protein TonB. Can also transport catechol-substituted cephalosporins. Receptor for microcins M, H47 and E492. The chain is Catecholate siderophore receptor Fiu (fiu) from Escherichia coli O157:H7.